The primary structure comprises 40 residues: Dolichyl-diphosphooligosaccharide--protein glycosyltransferase subunit 4 (40 aa).

Residues 1-4 are Lumenal-facing; sequence MITD. The chain crosses the membrane as a helical span at residues 5 to 25; sequence VQLAIFSNVLGVFLFLLVVAY. Over 26 to 40 the chain is Cytoplasmic; it reads HYINANTGKSSIKTK.

Belongs to the OST4 family. Component of the oligosaccharyltransferase (OST) complex.

The protein resides in the endoplasmic reticulum membrane. Subunit of the oligosaccharyl transferase (OST) complex that catalyzes the initial transfer of a defined glycan (Glc(3)Man(9)GlcNAc(2) in eukaryotes) from the lipid carrier dolichol-pyrophosphate to an asparagine residue within an Asn-X-Ser/Thr consensus motif in nascent polypeptide chains, the first step in protein N-glycosylation. N-glycosylation occurs cotranslationally and the complex associates with the Sec61 complex at the channel-forming translocon complex that mediates protein translocation across the endoplasmic reticulum (ER). All subunits are required for a maximal enzyme activity. This chain is Dolichyl-diphosphooligosaccharide--protein glycosyltransferase subunit 4, found in Drosophila virilis (Fruit fly).